Consider the following 122-residue polypeptide: Large ribosomal subunit protein uL14 (122 aa).

It belongs to the universal ribosomal protein uL14 family. In terms of assembly, part of the 50S ribosomal subunit. Forms a cluster with proteins L3 and L19. In the 70S ribosome, L14 and L19 interact and together make contacts with the 16S rRNA in bridges B5 and B8.

Functionally, binds to 23S rRNA. Forms part of two intersubunit bridges in the 70S ribosome. The chain is Large ribosomal subunit protein uL14 from Rickettsia typhi (strain ATCC VR-144 / Wilmington).